A 332-amino-acid polypeptide reads, in one-letter code: Ribonucleoside-diphosphate reductase small chain C (332 aa).

The Fe cation site is built by Asp76, Glu107, and His110. Tyr114 is an active-site residue. Glu169, Glu203, and His206 together coordinate Fe cation.

The protein belongs to the ribonucleoside diphosphate reductase small chain family. In terms of assembly, homodimer and heterodimer with RNR2A. Heterotetramer of two R1 and two R2 chains. Interacts with CSN7 (via C-terminal tail). It depends on Fe cation as a cofactor. In terms of tissue distribution, expressed in roots, cauline and rosette leaves, stems and flowers.

Its subcellular location is the cytoplasm. The protein resides in the nucleus. It catalyses the reaction a 2'-deoxyribonucleoside 5'-diphosphate + [thioredoxin]-disulfide + H2O = a ribonucleoside 5'-diphosphate + [thioredoxin]-dithiol. Provides the precursors necessary for DNA synthesis. Catalyzes the biosynthesis of deoxyribonucleotides from the corresponding ribonucleotides. Involved in DNA damage repair and programmed cell death inhibition. The protein is Ribonucleoside-diphosphate reductase small chain C (TSO2) of Arabidopsis thaliana (Mouse-ear cress).